The sequence spans 314 residues: 2,3-dihydroxyphenylpropionate/2,3-dihydroxicinnamic acid 1,2-dioxygenase (314 aa).

Histidine 115 (proton donor) is an active-site residue. Histidine 179 (proton acceptor) is an active-site residue.

It belongs to the LigB/MhpB extradiol dioxygenase family. As to quaternary structure, homotetramer. Requires Fe(2+) as cofactor.

It catalyses the reaction 3-(2,3-dihydroxyphenyl)propanoate + O2 = (2Z,4E)-2-hydroxy-6-oxonona-2,4-dienedioate + H(+). The enzyme catalyses (2E)-3-(2,3-dihydroxyphenyl)prop-2-enoate + O2 = (2Z,4E,7E)-2-hydroxy-6-oxonona-2,4,7-trienedioate + H(+). Its pathway is aromatic compound metabolism; 3-phenylpropanoate degradation. Catalyzes the non-heme iron(II)-dependent oxidative cleavage of 2,3-dihydroxyphenylpropionic acid and 2,3-dihydroxicinnamic acid into 2-hydroxy-6-ketononadienedioate and 2-hydroxy-6-ketononatrienedioate, respectively. The polypeptide is 2,3-dihydroxyphenylpropionate/2,3-dihydroxicinnamic acid 1,2-dioxygenase (Cupriavidus pinatubonensis (strain JMP 134 / LMG 1197) (Cupriavidus necator (strain JMP 134))).